Reading from the N-terminus, the 169-residue chain is Regulator of sigma D (169 aa).

Belongs to the Rsd/AlgQ family. In terms of assembly, interacts with RpoD.

The protein resides in the cytoplasm. Its function is as follows. Binds RpoD and negatively regulates RpoD-mediated transcription activation by preventing the interaction between the primary sigma factor RpoD with the catalytic core of the RNA polymerase and with promoter DNA. May be involved in replacement of the RNA polymerase sigma subunit from RpoD to RpoS during the transition from exponential growth to the stationary phase. In Yersinia pseudotuberculosis serotype O:1b (strain IP 31758), this protein is Regulator of sigma D.